The sequence spans 153 residues: ORM1-like protein 2 (153 aa).

The Cytoplasmic segment spans residues 1–21; that stretch reads MNVGVAHSEVNPNTRVMNSRG. Helical transmembrane passes span 22 to 42 and 43 to 63; these read IWLA…SIPF and FSIP…TYVF. Topologically, residues 64–105 are cytoplasmic; it reads LHTVKGTPFETPDQGKARLLTHWEQMDYGLQFTSSRKFLSIS. The helical transmembrane segment at 106–126 threads the bilayer; the sequence is PIVLYLLASFYTKYDAAHFLI. At 127 to 153 the chain is on the extracellular side; sequence NTASLLSVLLPKLPQFHGVRVFGINKY.

This sequence belongs to the ORM family. In terms of assembly, ceramide-sensitive subunit of the serine palmitoyltransferase (SPT) complex, which is also composed of SPTLC1, SPTLC2/3 and SPTSSA/B. As to expression, widely expressed. Expressed in adult and fetal heart, brain, lung, liver, skeletal muscle and kidney. Expressed in adult pancreas and placenta and in fetal spleen abd thymus.

Its subcellular location is the endoplasmic reticulum membrane. In terms of biological role, plays an essential role in the homeostatic regulation of sphingolipid de novo biosynthesis by modulating the activity of the serine palmitoyltransferase (SPT) in response to ceramide levels. When complexed to SPT, the binding of ceramides to its N-terminus stabilizes a conformation that block SPT substrate entry, hence preventing SPT catalytic activity. Through this mechanism, maintains ceramide levels at sufficient concentrations for the production of complex sphingolipids, but which prevents the accumulation of ceramides to levels that trigger apoptosis. This Homo sapiens (Human) protein is ORM1-like protein 2 (ORMDL2).